Consider the following 144-residue polypeptide: Superoxide dismutase [Mn], mitochondrial (144 aa).

His10, His58, and Asp143 together coordinate Mn(2+).

This sequence belongs to the iron/manganese superoxide dismutase family. Homotetramer. It depends on Mn(2+) as a cofactor.

The protein resides in the mitochondrion matrix. The enzyme catalyses 2 superoxide + 2 H(+) = H2O2 + O2. Destroys superoxide anion radicals which are normally produced within the cells and which are toxic to biological systems. The chain is Superoxide dismutase [Mn], mitochondrial from Apostichopus californicus (California sea cucumber).